The primary structure comprises 485 residues: NADH-quinone oxidoreductase subunit N (485 aa).

14 helical membrane-spanning segments follow: residues 8–28 (LIALLPLLIVGLTVVVVMLSI), 35–55 (FLNATLSVIGLNAALVSLWFV), 71–91 (GFAMLYTGLVQVASLATCTFA), 105–125 (FYLLVLIASLGGILLANANHL), 127–147 (ALFLGIELISLPLFGLIGYAF), 159–179 (YTILSAAASSFLLFGMALVYA), 203–223 (LLAGFGLMIVGLGFKLSLVPF), 235–255 (PAPVSTFLATASKIAIFGVVM), 271–291 (VVLGIIAFASIIFGNLMALSQ), 297–317 (LLGYSSISHLGYLLVALIALQ), 326–346 (VGVYLAGYLFSSLGAFGVVSL), 373–393 (AAVMTVMMLSLAGIPMTLGFI), 408–430 (WWLVAAVVVGSAIGLYYYLRVAV), and 455–475 (IVVLISALLVLVLGVWPQPLI).

This sequence belongs to the complex I subunit 2 family. In terms of assembly, NDH-1 is composed of 13 different subunits. Subunits NuoA, H, J, K, L, M, N constitute the membrane sector of the complex.

The protein localises to the cell inner membrane. The catalysed reaction is a quinone + NADH + 5 H(+)(in) = a quinol + NAD(+) + 4 H(+)(out). Its function is as follows. NDH-1 shuttles electrons from NADH, via FMN and iron-sulfur (Fe-S) centers, to quinones in the respiratory chain. The immediate electron acceptor for the enzyme in this species is believed to be ubiquinone. Couples the redox reaction to proton translocation (for every two electrons transferred, four hydrogen ions are translocated across the cytoplasmic membrane), and thus conserves the redox energy in a proton gradient. This chain is NADH-quinone oxidoreductase subunit N, found in Salmonella gallinarum (strain 287/91 / NCTC 13346).